The primary structure comprises 333 residues: L-lactate dehydrogenase B chain (333 aa).

Residues 29–57 and Arg99 contribute to the NAD(+) site; that span reads GQVG…LEDK. Substrate is bound by residues Arg106, Asn138, and Arg169. An NAD(+)-binding site is contributed by Asn138. His193 (proton acceptor) is an active-site residue. A substrate-binding site is contributed by Thr248.

The protein belongs to the LDH/MDH superfamily. LDH family. As to quaternary structure, homotetramer.

It localises to the cytoplasm. The catalysed reaction is (S)-lactate + NAD(+) = pyruvate + NADH + H(+). It participates in fermentation; pyruvate fermentation to lactate; (S)-lactate from pyruvate: step 1/1. Interconverts simultaneously and stereospecifically pyruvate and lactate with concomitant interconversion of NADH and NAD(+). This Gallus gallus (Chicken) protein is L-lactate dehydrogenase B chain (LDHB).